The sequence spans 130 residues: Large ribosomal subunit protein bL20 (130 aa).

Belongs to the bacterial ribosomal protein bL20 family.

In terms of biological role, binds directly to 23S ribosomal RNA and is necessary for the in vitro assembly process of the 50S ribosomal subunit. It is not involved in the protein synthesizing functions of that subunit. This Solibacter usitatus (strain Ellin6076) protein is Large ribosomal subunit protein bL20.